The primary structure comprises 344 residues: Nuclear distribution protein nudE-like 1-A (344 aa).

The stretch at 26 to 187 (YKKSYKEAQE…RQELAVRDTR (162 aa)) forms a coiled coil. A compositionally biased stretch (basic and acidic residues) spans 181–190 (LAVRDTRSEV). Disordered stretches follow at residues 181–209 (LAVR…TDSA) and 322–344 (PGDG…VLSV).

This sequence belongs to the nudE family. In terms of processing, phosphorylated in mitosis.

Its subcellular location is the cytoplasm. It is found in the cytoskeleton. It localises to the microtubule organizing center. The protein localises to the centrosome. The protein resides in the spindle. Functionally, required for organization of the cellular microtubule array and microtubule anchoring at the centrosome. Positively regulates the activity of the minus-end directed microtubule motor protein dynein. May enhance dynein-mediated microtubule sliding by targeting dynein to the microtubule plus end. The protein is Nuclear distribution protein nudE-like 1-A (ndel1a) of Danio rerio (Zebrafish).